The following is a 307-amino-acid chain: tRNA pseudouridine synthase B (307 aa).

The active-site Nucleophile is Asp-48.

This sequence belongs to the pseudouridine synthase TruB family. Type 1 subfamily.

The enzyme catalyses uridine(55) in tRNA = pseudouridine(55) in tRNA. Its function is as follows. Responsible for synthesis of pseudouridine from uracil-55 in the psi GC loop of transfer RNAs. This chain is tRNA pseudouridine synthase B, found in Neisseria meningitidis serogroup B (strain ATCC BAA-335 / MC58).